The sequence spans 691 residues: DNA ligase (691 aa).

Residues 41–45 (DAEYD), 90–91 (SL), and Glu-130 each bind NAD(+). The active-site N6-AMP-lysine intermediate is the Lys-132. Arg-153, Glu-190, Lys-307, and Lys-331 together coordinate NAD(+). The Zn(2+) site is built by Cys-425, Cys-428, Cys-443, and Cys-449. The region spanning 610–691 (APQGVLAGKT…LHQLLEGNTQ (82 aa)) is the BRCT domain.

It belongs to the NAD-dependent DNA ligase family. LigA subfamily. Mg(2+) is required as a cofactor. Requires Mn(2+) as cofactor.

It carries out the reaction NAD(+) + (deoxyribonucleotide)n-3'-hydroxyl + 5'-phospho-(deoxyribonucleotide)m = (deoxyribonucleotide)n+m + AMP + beta-nicotinamide D-nucleotide.. DNA ligase that catalyzes the formation of phosphodiester linkages between 5'-phosphoryl and 3'-hydroxyl groups in double-stranded DNA using NAD as a coenzyme and as the energy source for the reaction. It is essential for DNA replication and repair of damaged DNA. This chain is DNA ligase, found in Burkholderia vietnamiensis (strain G4 / LMG 22486) (Burkholderia cepacia (strain R1808)).